The sequence spans 588 residues: MRFSGFVSGLGLGLLTAVSASPAAFPAPASIPDPIPAPVAPASPAIEERAAKVTVAVPSGTVVGSSSGKVDSFRGIPFADPPTGSLRLRPPKRLSKSLGTFDASGLSAAACPQMFISSGGQSVITEFLSDFLAVPFLTPITGQEDCLTITVQRPAGTKAGDKLPVLFWIFGGGFELGSSAMYDGTSLLSTAIDQSQPFIYVAVNYRVAGFGFMPGAEIKKDGSSNLGLLDQRMGLEWVADNIASFGGDPEKVTIWGESAGSISVLDQMVLYGGDASYKGKSLFRGAIMNSGTIVPAEPVDSDKAQSIYDTVVKTGGCSGASDTLECLRGLSYDKFLNAANSVPGLLSYNSLALSYLPRPDGKVLPKSPDVLVATGQYHAVPMITGCQEDEGTLFALFQPNVTTTSRLVEYLQNLYFTQATKQQVTALVNTYPTTLSTGSPYRTGLLNEVFPGFKRRAAILGDLVVSLTRRIFLQAAANSNPDVPSWSYLASYDYGTPILGTFHGSDLLQVFYGLLPNNAMRSVRTYYFNFVYNLDPNKGVTKYAKWPEWKESKKLMWFETANKNSIINDDFRQDSYEFIAANAGALVV.

A signal peptide spans 1–20 (MRFSGFVSGLGLGLLTAVSA). The active-site Acyl-ester intermediate is the Ser258. A glycan (N-linked (GlcNAc...) asparagine) is linked at Asn400.

Belongs to the type-B carboxylesterase/lipase family.

Its subcellular location is the secreted. It carries out the reaction a triacylglycerol + H2O = a diacylglycerol + a fatty acid + H(+). In terms of biological role, secreted acylglycerol lipase required for efficient utilization of saturated triglyceride lipids. Is not involved in virulence. The protein is Secreted triacylglycerol lipase LIP1 of Gibberella zeae (strain ATCC MYA-4620 / CBS 123657 / FGSC 9075 / NRRL 31084 / PH-1) (Wheat head blight fungus).